The primary structure comprises 453 residues: Growth/differentiation factor 9 (453 aa).

Residues 1–27 (MALPNKFFLWFCCFAWLCFPISLDSLP) form the signal peptide. Residues 28–318 (SRGEAQIVAR…EGVRSSRHRR (291 aa)) constitute a propeptide that is removed on maturation. N-linked (GlcNAc...) asparagine glycosylation is found at Asn163, Asn236, Asn255, and Asn269. The interval 282–328 (LHPKRKPSQGPDQRRELSAYPVGEEAAEGVRSSRHRRDQESVSSELK) is disordered. Basic and acidic residues predominate over residues 318 to 328 (RDQESVSSELK). Residue Asn337 is glycosylated (N-linked (GlcNAc...) asparagine). Cystine bridges form between Cys352/Cys418, Cys381/Cys450, and Cys385/Cys452.

It belongs to the TGF-beta family. Homodimer or heterodimer (Potential). But, in contrast to other members of this family, cannot be disulfide-linked. Phosphorylated; phosphorylation is critical for GDF9 function.

The protein localises to the secreted. Its function is as follows. Required for ovarian folliculogenesis. The polypeptide is Growth/differentiation factor 9 (GDF9) (Capra hircus (Goat)).